The primary structure comprises 77 residues: MADTLSRITKIVVDRLGVDEAEVKPEASFKDDLGADSLDVVELVMELEDEFDLEISDEEAEKIATVADVVEYIEGRQ.

In terms of domain architecture, Carrier spans 2 to 77 (ADTLSRITKI…DVVEYIEGRQ (76 aa)). Serine 37 carries the O-(pantetheine 4'-phosphoryl)serine modification.

It belongs to the acyl carrier protein (ACP) family. In terms of processing, 4'-phosphopantetheine is transferred from CoA to a specific serine of apo-ACP by AcpS. This modification is essential for activity because fatty acids are bound in thioester linkage to the sulfhydryl of the prosthetic group.

It localises to the cytoplasm. It participates in lipid metabolism; fatty acid biosynthesis. Functionally, carrier of the growing fatty acid chain in fatty acid biosynthesis. This is Acyl carrier protein from Halalkalibacterium halodurans (strain ATCC BAA-125 / DSM 18197 / FERM 7344 / JCM 9153 / C-125) (Bacillus halodurans).